A 684-amino-acid chain; its full sequence is Galactocerebrosidase (684 aa).

The signal sequence occupies residues M1–A42. Substrate is bound by residues T109, W151, and N197. The active-site Proton donor/acceptor is the E198. The active-site Nucleophile is E274. C287 and C394 form a disulfide bridge. N-linked (GlcNAc...) asparagine glycans are attached at residues N300 and N379. Residue R396 participates in substrate binding. N-linked (GlcNAc...) asparagine glycosylation is found at N403, N558, N601, and N645.

The protein belongs to the glycosyl hydrolase 59 family. As to expression, detected in brain and kidney.

It is found in the lysosome. The enzyme catalyses a beta-D-galactosyl-(1&lt;-&gt;1')-N-acylsphing-4-enine + H2O = an N-acylsphing-4-enine + D-galactose. The catalysed reaction is a D-galactosylceramide + H2O = an N-acyl-sphingoid base + D-galactose. It catalyses the reaction beta-D-galactosyl-(1&lt;-&gt;1)-sphing-4-enine + H2O = sphing-4-enine + D-galactose. In terms of biological role, hydrolyzes the galactose ester bonds of glycolipids such as galactosylceramide and galactosylsphingosine. Enzyme with very low activity responsible for the lysosomal catabolism of galactosylceramide, a major lipid in myelin, kidney and epithelial cells of small intestine and colon. The protein is Galactocerebrosidase of Mus musculus (Mouse).